Here is a 269-residue protein sequence, read N- to C-terminus: MPELPEVETSRRGIEPHLVGATILHAVVRNGRLRWPVSEEIYRLSDQPVLSVQRRAKYLLLELPEGWIIIHLGMSGSLRILPEELPPEKHDHVDLVMSNGKVLRYTDPRRFGAWLWTKELEGHNVLTHLGPEPLSDDFNGEYLHQKCAKKKTAIKPWLMDNKLVVGVGNIYASESLFAAGIHPDRLASSLSLAECELLARVIKAVLLRSIEQGGTTLKDFLQSDGKPGYFAQELQVYGRKGEPCRVCGTPIVATKHAQRATFYCRQCQK.

Residue proline 2 is the Schiff-base intermediate with DNA of the active site. Glutamate 3 serves as the catalytic Proton donor. Lysine 57 acts as the Proton donor; for beta-elimination activity in catalysis. 3 residues coordinate DNA: histidine 90, arginine 109, and lysine 150. The segment at 235 to 269 adopts an FPG-type zinc-finger fold; that stretch reads QVYGRKGEPCRVCGTPIVATKHAQRATFYCRQCQK. Arginine 259 functions as the Proton donor; for delta-elimination activity in the catalytic mechanism.

Belongs to the FPG family. Monomer. Requires Zn(2+) as cofactor.

It catalyses the reaction Hydrolysis of DNA containing ring-opened 7-methylguanine residues, releasing 2,6-diamino-4-hydroxy-5-(N-methyl)formamidopyrimidine.. The catalysed reaction is 2'-deoxyribonucleotide-(2'-deoxyribose 5'-phosphate)-2'-deoxyribonucleotide-DNA = a 3'-end 2'-deoxyribonucleotide-(2,3-dehydro-2,3-deoxyribose 5'-phosphate)-DNA + a 5'-end 5'-phospho-2'-deoxyribonucleoside-DNA + H(+). In terms of biological role, involved in base excision repair of DNA damaged by oxidation or by mutagenic agents. Acts as a DNA glycosylase that recognizes and removes damaged bases. Has a preference for oxidized purines, such as 7,8-dihydro-8-oxoguanine (8-oxoG). Has AP (apurinic/apyrimidinic) lyase activity and introduces nicks in the DNA strand. Cleaves the DNA backbone by beta-delta elimination to generate a single-strand break at the site of the removed base with both 3'- and 5'-phosphates. The protein is Formamidopyrimidine-DNA glycosylase of Escherichia coli (strain K12 / MC4100 / BW2952).